We begin with the raw amino-acid sequence, 78 residues long: Large ribosomal subunit protein bL28 (78 aa).

The interval 1–29 (MSAHCQVTGRQPSFGKSVSHSHRRTSRRW) is disordered.

It belongs to the bacterial ribosomal protein bL28 family.

This is Large ribosomal subunit protein bL28 from Corynebacterium efficiens (strain DSM 44549 / YS-314 / AJ 12310 / JCM 11189 / NBRC 100395).